We begin with the raw amino-acid sequence, 135 residues long: ATP synthase epsilon chain (135 aa).

This sequence belongs to the ATPase epsilon chain family. In terms of assembly, F-type ATPases have 2 components, CF(1) - the catalytic core - and CF(0) - the membrane proton channel. CF(1) has five subunits: alpha(3), beta(3), gamma(1), delta(1), epsilon(1). CF(0) has three main subunits: a, b and c.

The protein localises to the cell inner membrane. Its function is as follows. Produces ATP from ADP in the presence of a proton gradient across the membrane. This chain is ATP synthase epsilon chain, found in Brucella abortus (strain S19).